Consider the following 209-residue polypeptide: Large ribosomal subunit protein uL3 (209 aa).

Over residues 112 to 122 (GTTRGHGTQGN) the composition is skewed to polar residues. Residues 112–146 (GTTRGHGTQGNIKRWGQSRGPETHGSRYHRIPGSM) form a disordered region.

The protein belongs to the universal ribosomal protein uL3 family. In terms of assembly, part of the 50S ribosomal subunit. Forms a cluster with proteins L14 and L19.

In terms of biological role, one of the primary rRNA binding proteins, it binds directly near the 3'-end of the 23S rRNA, where it nucleates assembly of the 50S subunit. The protein is Large ribosomal subunit protein uL3 of Lactobacillus johnsonii (strain CNCM I-12250 / La1 / NCC 533).